The following is a 90-amino-acid chain: Small ribosomal subunit protein bS20 (90 aa).

The protein belongs to the bacterial ribosomal protein bS20 family.

Binds directly to 16S ribosomal RNA. In Francisella tularensis subsp. holarctica (strain FTNF002-00 / FTA), this protein is Small ribosomal subunit protein bS20.